The primary structure comprises 64 residues: Ferredoxin-2 (64 aa).

The 4Fe-4S ferredoxin-type domain occupies 2-29; sequence RIHVDQDKCCGAGSCVLAAPDVFDQREE. Positions 10, 16, and 55 each coordinate [3Fe-4S] cluster.

[3Fe-4S] cluster serves as cofactor.

Its function is as follows. Electron transport protein for the cytochrome P-450-SU2 system. This is Ferredoxin-2 (subB) from Streptomyces griseolus.